The chain runs to 433 residues: Glycerol-3-phosphate dehydrogenase [NAD(+)] (433 aa).

Residues 17-22 (GSGNWG), phenylalanine 49, and phenylalanine 117 each bind NAD(+). Lysine 140 is a binding site for substrate. Alanine 173 serves as a coordination point for NAD(+). Positions 187-246 (IAYDPPPIDSSRAATPRDRSPNYDSTSANKLPDLTVTSADSNGKDDRGRRTKAKLTPVPE) are disordered. The span at 208–227 (NYDSTSANKLPDLTVTSADS) shows a compositional bias: polar residues. Residue lysine 283 is the Proton acceptor of the active site. Residues arginine 349 and glutamine 378 each coordinate NAD(+). 349–350 (RN) is a binding site for substrate.

It belongs to the NAD-dependent glycerol-3-phosphate dehydrogenase family.

The enzyme catalyses sn-glycerol 3-phosphate + NAD(+) = dihydroxyacetone phosphate + NADH + H(+). This Pyricularia oryzae (strain Y34) (Rice blast fungus) protein is Glycerol-3-phosphate dehydrogenase [NAD(+)].